We begin with the raw amino-acid sequence, 91 residues long: Small ribosomal subunit protein uS17 (91 aa).

This sequence belongs to the universal ribosomal protein uS17 family. Part of the 30S ribosomal subunit.

One of the primary rRNA binding proteins, it binds specifically to the 5'-end of 16S ribosomal RNA. The protein is Small ribosomal subunit protein uS17 of Saccharopolyspora erythraea (strain ATCC 11635 / DSM 40517 / JCM 4748 / NBRC 13426 / NCIMB 8594 / NRRL 2338).